The primary structure comprises 325 residues: 1-aminocyclopropane-1-carboxylate oxidase 2 (325 aa).

Positions Pro-157–Pro-257 constitute a Fe2OG dioxygenase domain. Residues His-181, Asp-183, and His-238 each contribute to the Fe cation site.

This sequence belongs to the iron/ascorbate-dependent oxidoreductase family. Fe cation is required as a cofactor.

It carries out the reaction 1-aminocyclopropane-1-carboxylate + L-ascorbate + O2 = ethene + L-dehydroascorbate + hydrogen cyanide + CO2 + 2 H2O. The protein operates within alkene biosynthesis; ethylene biosynthesis via S-adenosyl-L-methionine; ethylene from S-adenosyl-L-methionine: step 2/2. The polypeptide is 1-aminocyclopropane-1-carboxylate oxidase 2 (ACO2) (Doritaenopsis sp. (Moth orchid)).